The following is a 766-amino-acid chain: Serine/threonine-protein kinase PKH1 (766 aa).

A disordered region spans residues 1–52 (MGNRSLTEADHALLSKPLVPTSAEHTQTQEYPRPFVDGSNSQSGSELQASPQ). The span at 38–52 (GSNSQSGSELQASPQ) shows a compositional bias: polar residues. The region spanning 125 to 391 (FKFGEQLGDG…IKQIKAHLFF (267 aa)) is the Protein kinase domain. ATP contacts are provided by residues 135 to 137 (SYS) and Lys-154. Residues 156-201 (LSKEYLIRQKKVKYVTVEKLALQKLNGTKGIFKLFFTFQDEASLYF) form a PIF-pocket region. ATP contacts are provided by residues 204–206 (EYA) and Asp-210. Asp-249 (proton acceptor) is an active-site residue. Positions 253 and 267 each coordinate ATP. Residues Ser-294 and Ser-296 each carry the phosphoserine modification. The span at 476–495 (TSQPKLGSKSSTSVRSASNN) shows a compositional bias: polar residues. 2 disordered regions span residues 476-529 (TSQP…NRSR) and 725-745 (PEEG…SSSN). A compositionally biased stretch (low complexity) spans 511–521 (SVSSPSISTTS). Residues 735-745 (PTSLQTRSSSN) show a composition bias toward polar residues.

This sequence belongs to the protein kinase superfamily. AGC Ser/Thr protein kinase family. PDPK1 subfamily.

It catalyses the reaction L-seryl-[protein] + ATP = O-phospho-L-seryl-[protein] + ADP + H(+). It carries out the reaction L-threonyl-[protein] + ATP = O-phospho-L-threonyl-[protein] + ADP + H(+). Activates YPK1 by phosphorylating of a threonine residue. This is Serine/threonine-protein kinase PKH1 (PKH1) from Saccharomyces cerevisiae (strain ATCC 204508 / S288c) (Baker's yeast).